The following is a 351-amino-acid chain: Nuclear inhibitor of protein phosphatase 1 (351 aa).

Residues 1-142 (MAAAANSGSS…LPSAVKGDEK (142 aa)) form an interaction with CDC5L, SF3B1 and MELK region. Residues 49–101 (YLFGRNPDLCDFTIDHQSCSRVHAALVYHKHLKRVFLIDLNSTHGTFLGHIRL) enclose the FHA domain. The interaction with EED stretch occupies residues 143-224 (MGGEDDELKG…VDPSVGRFRN (82 aa)). Residue T161 is modified to Phosphothreonine. Residues S178 and S199 each carry the phosphoserine modification. Short sequence motifs (nuclear localization signal) lie at residues 185-209 (GNLD…DDEI) and 210-240 (INPE…RVEG). Residues 191 to 200 (RPKRKRKNSR) form an involved in PP-1 inhibition region. The tract at residues 200–203 (RVTF) is involved in PP-1 binding. Residue S204 is modified to Phosphoserine. S249 carries the phosphoserine modification. Y264 carries the phosphotyrosine; by LYN; in vitro modification. The interval 310–329 (AVNMNPAPNPAVYNPEAVNE) is interaction with EED. The disordered stretch occupies residues 316 to 351 (APNPAVYNPEAVNEPKKKKYAKEAWPGKKPTPSLLI). The segment at 330-351 (PKKKKYAKEAWPGKKPTPSLLI) is RNA-binding. Residues 331-337 (KKKKYAK) form an involved in PP-1 inhibition region. The residue at position 335 (Y335) is a Phosphotyrosine.

In terms of assembly, interacts with phosphorylated CDC5L, SF3B1 and MELK. Interacts with EED, in a nucleic acid-stimulated manner. Part of a complex consisting of PPP1R8, EED, HDAC2 and PP-1. Part of the spliceosome. Interacts with PPP1CA, PPP1CB and PPP1CC. Mg(2+) serves as cofactor. Post-translationally, may be inactivated by phosphorylation on Ser-199 or Ser-204. Phosphorylated by Lyn in vitro on Tyr-264, and also on Tyr-335 in the presence of RNA. In terms of tissue distribution, ubiquitously expressed, with highest levels in heart and skeletal muscle, followed by brain, placenta, lung, liver and pancreas. Less abundant in kidney. The concentration and ratio between isoforms is cell-type dependent. Isoform Alpha (&gt;90%) and isoform Beta were found in brain, heart and kidney. Isoform Gamma is mainly found in B-cells and T-lymphocytes, and has been found in 293 embryonic kidney cells.

It localises to the nucleus. The protein localises to the nucleus speckle. It is found in the cytoplasm. In terms of biological role, inhibitor subunit of the major nuclear protein phosphatase-1 (PP-1). It has RNA-binding activity but does not cleave RNA and may target PP-1 to RNA-associated substrates. May also be involved in pre-mRNA splicing. Binds DNA and might act as a transcriptional repressor. Seems to be required for cell proliferation. Isoform Gamma is a site-specific single-strand endoribonuclease that cleaves single strand RNA 3' to purines and pyrimidines in A+U-rich regions. It generates 5'-phosphate termini at the site of cleavage. This isoform does not inhibit PP-1. May be implicated in mRNA splicing. The chain is Nuclear inhibitor of protein phosphatase 1 (PPP1R8) from Homo sapiens (Human).